The sequence spans 323 residues: Cytochrome c biogenesis protein CcsA (323 aa).

8 helical membrane passes run 17 to 37, 44 to 64, 68 to 88, 98 to 118, 143 to 163, 229 to 249, 262 to 279, and 291 to 311; these read VVSI…IVGF, GMII…FFSG, FSDL…FYMV, LSTI…SGLL, MILG…ILVI, IISL…VWAN, ETWA…LHSR, and IVAS…NLLG.

The protein belongs to the CcmF/CycK/Ccl1/NrfE/CcsA family. As to quaternary structure, may interact with Ccs1.

It localises to the plastid. The protein resides in the chloroplast thylakoid membrane. Functionally, required during biogenesis of c-type cytochromes (cytochrome c6 and cytochrome f) at the step of heme attachment. In Lotus japonicus (Lotus corniculatus var. japonicus), this protein is Cytochrome c biogenesis protein CcsA.